The following is a 215-amino-acid chain: Probable phosphoglycerate mutase GpmB (215 aa).

Residues 8–15, 21–22, R58, R60, 82–85, and 151–152 contribute to the substrate site; these read RHGETLWN, QG, ELNM, and GM. The Tele-phosphohistidine intermediate role is filled by H9. The active-site Proton donor/acceptor is E82.

It belongs to the phosphoglycerate mutase family. GpmB subfamily.

The catalysed reaction is (2R)-2-phosphoglycerate = (2R)-3-phosphoglycerate. It participates in carbohydrate degradation; glycolysis; pyruvate from D-glyceraldehyde 3-phosphate: step 3/5. This is Probable phosphoglycerate mutase GpmB from Erwinia tasmaniensis (strain DSM 17950 / CFBP 7177 / CIP 109463 / NCPPB 4357 / Et1/99).